The chain runs to 517 residues: Cytochrome P450 CYP72A616 (517 aa).

Residues 5 to 25 traverse the membrane as a helical segment; the sequence is VLGALAALLAAAAAWVMRAAA. Cys465 contributes to the heme binding site.

The protein belongs to the cytochrome P450 family. As to expression, mainly expressed in leaves and, at low levels, in roots, fruits and stems.

The protein localises to the membrane. It functions in the pathway steroid metabolism; cholesterol metabolism. Its function is as follows. Involved in the biosynthesis of spiroketal steroid and saponin natural products from cholesterol such as diosgenin and analogs (e.g. furostanol and spirostanol), plant defense compounds used as main precursors for the industrial production of steroid hormones. During the 5,6-spiroketalization of cholesterol, may catalyze the 27-monohydroxylation of furostanol-type steroid to an intermediate product that undergoes a stereospecific formation of the terminal heterocycle to yield diosgenin. The protein is Cytochrome P450 CYP72A616 of Paris polyphylla (Daiswa polyphylla).